The primary structure comprises 382 residues: uncharacterized protein (382 aa).

12 consecutive transmembrane segments (helical) span residues 8-28, 45-65, 75-95, 102-122, 131-151, 157-177, 204-224, 231-251, 270-290, 291-311, 325-345, and 349-369; these read VMLL…LNTL, MVSS…GYLI, YLAS…VGFW, FIAG…LMCS, LLAA…LLVS, LLHV…PLLF, LGVN…GLMP, GMAN…GILG, VQVF…AMAP, ALFI…AWAC, ALLL…AMLM, and SDNL…LMLL.

This sequence belongs to the major facilitator superfamily. YcaD (TC 2.A.1.26) family.

Its subcellular location is the cell inner membrane. This is an uncharacterized protein from Salmonella agona (strain SL483).